Consider the following 37-residue polypeptide: M-oxotoxin-Ot2b (37 aa).

Expressed by the venom gland.

It is found in the secreted. Disrupts biological membranes, particularly those rich in phosphocholine. Has antimicrobial activity against Gram-negative bacterium E.coli, Gram-positive bacteria B.subtilis and S.aureus, and hemolytic activity against sheep, pig and guinea pig red blood cells. Has insecticidal activity against S.frugiperda ovarian cells by opening non-selective ion channels. Enhances the insecticidal activity of spider venom neurotoxic peptides. The protein is M-oxotoxin-Ot2b of Oxyopes takobius (Lynx spider).